The chain runs to 256 residues: Cysteine-rich repeat secretory protein 29 (256 aa).

The N-terminal stretch at 1 to 26 (MSSVFGSVHILAMIAIQLLLIHSVSS) is a signal peptide. Gnk2-homologous domains follow at residues 33 to 136 (YLHH…SVAS) and 142 to 253 (YEND…LYPF).

It belongs to the cysteine-rich repeat secretory protein family.

It is found in the secreted. In Arabidopsis thaliana (Mouse-ear cress), this protein is Cysteine-rich repeat secretory protein 29 (CRRSP29).